The sequence spans 130 residues: Small ribosomal subunit protein uS8 (130 aa).

The protein belongs to the universal ribosomal protein uS8 family. As to quaternary structure, part of the 30S ribosomal subunit. Contacts proteins S5 and S12.

Functionally, one of the primary rRNA binding proteins, it binds directly to 16S rRNA central domain where it helps coordinate assembly of the platform of the 30S subunit. The chain is Small ribosomal subunit protein uS8 from Marinobacter nauticus (strain ATCC 700491 / DSM 11845 / VT8) (Marinobacter aquaeolei).